Here is a 222-residue protein sequence, read N- to C-terminus: UPF0316 protein Mboo_0791 (222 aa).

3 helical membrane-spanning segments follow: residues 25–45 (FFLFTPDILNYIVLPVLIFLA), 67–87 (LAPVIAFFEIIIWLLAIVGVL), and 93–113 (IAYFLAYAFGFALGTYVGLVI).

This sequence belongs to the UPF0316 family.

It is found in the cell membrane. This is UPF0316 protein Mboo_0791 from Methanoregula boonei (strain DSM 21154 / JCM 14090 / 6A8).